The following is a 798-amino-acid chain: Interphotoreceptor matrix proteoglycan 1 (798 aa).

A signal peptide spans 1-20 (MNLEIKHAILVLWIFLQVQG). N142 is a glycosylation site (N-linked (GlcNAc...) asparagine). The region spanning 238-360 (SEEKVEFSIS…PEAYLTAADL (123 aa)) is the SEA 1 domain. T442 and T445 each carry an O-linked (GalNAc...) threonine glycan. Residues 574-687 (HELVVFFSLR…YSLDIEPADQ (114 aa)) enclose the SEA 2 domain. N-linked (GlcNAc...) asparagine glycans are attached at residues N595 and N619. The short motif at 624–632 (KQLEILSFR) is the Heparin- and hyaluronan-binding element. 2 N-linked (GlcNAc...) asparagine glycosylation sites follow: N633 and N651. Residues 741 to 798 (ASQGQATPCRPPDHSTNQARQPSVKKLQRQQNKVVKKRNSELSATDFEELDDQDWEGN) form a disordered region. The span at 786–798 (DFEELDDQDWEGN) shows a compositional bias: acidic residues.

Post-translationally, highly glycosylated (N- and O-linked carbohydrates and sialic acid).

It localises to the cell projection. The protein localises to the cilium. The protein resides in the photoreceptor outer segment. It is found in the secreted. Its subcellular location is the extracellular space. It localises to the extracellular matrix. The protein localises to the interphotoreceptor matrix. The protein resides in the photoreceptor inner segment. Functionally, chondroitin sulfate-, heparin- and hyaluronan-binding protein. May serve to form a basic macromolecular scaffold comprising the insoluble interphotoreceptor matrix. This chain is Interphotoreceptor matrix proteoglycan 1, found in Rattus norvegicus (Rat).